A 550-amino-acid polypeptide reads, in one-letter code: Methionine--tRNA ligase (550 aa).

Residues 12-22 (PYANGPLHFGH) carry the 'HIGH' region motif. Positions 144, 147, 157, and 160 each coordinate Zn(2+). The short motif at 330–334 (QFSKS) is the 'KMSKS' region element. Residue lysine 333 participates in ATP binding.

This sequence belongs to the class-I aminoacyl-tRNA synthetase family. MetG type 1 subfamily. In terms of assembly, monomer. The cofactor is Zn(2+).

It localises to the cytoplasm. It carries out the reaction tRNA(Met) + L-methionine + ATP = L-methionyl-tRNA(Met) + AMP + diphosphate. In terms of biological role, is required not only for elongation of protein synthesis but also for the initiation of all mRNA translation through initiator tRNA(fMet) aminoacylation. This is Methionine--tRNA ligase from Chlamydia caviae (strain ATCC VR-813 / DSM 19441 / 03DC25 / GPIC) (Chlamydophila caviae).